Consider the following 1403-residue polypeptide: DNA-directed RNA polymerase subunit beta' (1403 aa).

Zn(2+) contacts are provided by cysteine 68, cysteine 70, cysteine 83, and cysteine 86. Mg(2+) is bound by residues aspartate 459, aspartate 461, and aspartate 463. Positions 814, 887, 894, and 897 each coordinate Zn(2+).

The protein belongs to the RNA polymerase beta' chain family. As to quaternary structure, the RNAP catalytic core consists of 2 alpha, 1 beta, 1 beta' and 1 omega subunit. When a sigma factor is associated with the core the holoenzyme is formed, which can initiate transcription. Requires Mg(2+) as cofactor. Zn(2+) serves as cofactor.

It catalyses the reaction RNA(n) + a ribonucleoside 5'-triphosphate = RNA(n+1) + diphosphate. DNA-dependent RNA polymerase catalyzes the transcription of DNA into RNA using the four ribonucleoside triphosphates as substrates. The chain is DNA-directed RNA polymerase subunit beta' from Solibacter usitatus (strain Ellin6076).